The primary structure comprises 143 residues: Small ribosomal subunit protein uS9 (143 aa).

Residues 123 to 143 (RPEPKKFGGRGARARFQKSYR) are disordered. Over residues 134–143 (ARARFQKSYR) the composition is skewed to basic residues.

This sequence belongs to the universal ribosomal protein uS9 family.

The chain is Small ribosomal subunit protein uS9 (RPS16) from Eremothecium gossypii (strain ATCC 10895 / CBS 109.51 / FGSC 9923 / NRRL Y-1056) (Yeast).